We begin with the raw amino-acid sequence, 675 residues long: Protein PALS1 (675 aa).

Disordered regions lie at residues 1 to 34 and 51 to 78; these read MTTS…KHRE and RRSA…KKQE. The tract at residues 1–345 is required for the correct localization of PALS1 and PATJ at cell-cell contacts and the normal formation of tight junctions and adherens junctions; it reads MTTSHMNGHV…QQIKPPPAKE (345 aa). Composition is skewed to basic and acidic residues over residues 10–34 and 54–78; these read VTEE…KHRE and AQLE…KKQE. Phosphoserine occurs at positions 14 and 25. The segment at 21 to 140 is interaction with PARD6B; sequence VDLASPEEHQ…LKHIQHTLID (120 aa). Residues Ser83 and Ser84 each carry the phosphoserine modification. 2 L27 domains span residues 120-177 and 179-235; these read KILE…NKAS and PFPL…MQLE. The segment at 181-243 is interaction with LIN7C; that stretch reads PLISNAQDLA…LEPITDERVY (63 aa). Residues 256 to 336 form the PDZ domain; it reads IVRIEKARDI…TLTFVLIPSQ (81 aa). An SH3 domain is found at 345–417; the sequence is ETVIHVKAHF…PGKSFQQQRE (73 aa). The region spanning 479–660 is the Guanylate kinase-like domain; the sequence is KRPIILIGPQ…AYQELLRLIN (182 aa). An ATP-binding site is contributed by 486–493; the sequence is GPQNCGQN.

It belongs to the MAGUK family. In terms of assembly, heterodimer with MPP1. Forms a heterotrimeric complex composed of PALS1, LIN7B and PATJ; the N-terminal L27 domain of PALS1 interacts with the L27 domain of PATJ and the C-terminal L27 domain of PALS1 interacts with the L27 domain of LIN7B. Component of a complex composed of PALS1, CRB1 and MPP4. Component of a complex whose core is composed of ARHGAP17, AMOT, PALS1, PATJ and PARD3/PAR3. Component of a complex composed of PALS1, CRB1 and EPB41L5. Within the complex, interacts (via HOOK domain) with EPB41L5 (via FERM domain), and interacts with CRB1 (via intracellular domain). Component of a complex composed of PALS1, MPP3 and CRB1; PALS1 acts as a bridging protein between MPP3 (via guanylate kinase-like domain) and CRB1. Component of a complex composed of CRB3, PALS1 and PATJ. As part of the Crumbs complex; interacts with WWP1, the interaction is enhanced by AMOTL2 and facilitates WWP1 localization to the plasma membrane. The Crumbs complex promotes monoubiquitination of AMOTL2 by WWP1, which activates the Hippo signaling pathway. Interacts (via PDZ domain) with PATJ (via N-terminus). Interacts with EZR. Interacts (via PDZ domain) with CRB1 (via C-terminal ERLI motif). While the PDZ domain is sufficient for interaction with CRB1, the adjacent SH3 and guanylate kinase-like domains are likely to contribute to a high affinity interaction. Interacts with WWTR1/TAZ (via WW domain). Interacts with MPP7. Interacts (via PDZ domain) with CRB3 (via C-terminus). Interacts with LIN7C. Interacts with MPDZ. Interacts with PARD6B. Interacts with SC6A1. Interacts with CDH5; the interaction promotes PALS1 localization to cell junctions and is required for CDH5-mediated vascular lumen formation and endothelial cell. Interacts with NPHP1 (via coiled coil and SH3 domains). Interacts with NPHP4. Interacts with CRB2.

It is found in the golgi apparatus. It localises to the cell membrane. Its subcellular location is the endomembrane system. The protein resides in the cell junction. The protein localises to the tight junction. It is found in the adherens junction. It localises to the cell projection. Its subcellular location is the axon. The protein resides in the perikaryon. The protein localises to the apical cell membrane. In terms of biological role, plays a role in tight junction biogenesis and in the establishment of cell polarity in epithelial cells. Also involved in adherens junction biogenesis by ensuring correct localization of the exocyst complex protein EXOC4/SEC8 which allows trafficking of adherens junction structural component CDH1 to the cell surface. Plays a role through its interaction with CDH5 in vascular lumen formation and endothelial membrane polarity. Required during embryonic and postnatal retinal development. Required for the maintenance of cerebellar progenitor cells in an undifferentiated proliferative state, preventing premature differentiation, and is required for cerebellar histogenesis, fissure formation, cerebellar layer organization and cortical development. Plays a role in neuronal progenitor cell survival, potentially via promotion of mTOR signaling. Plays a role in the radial and longitudinal extension of the myelin sheath in Schwann cells. May modulate SC6A1/GAT1-mediated GABA uptake by stabilizing the transporter. May play a role in the T-cell receptor-mediated activation of NF-kappa-B. Required for localization of EZR to the apical membrane of parietal cells and may play a role in the dynamic remodeling of the apical cytoskeleton. Required for the normal polarized localization of the vesicular marker STX4. Required for the correct trafficking of the myelin proteins PMP22 and MAG. Involved in promoting phosphorylation and cytoplasmic retention of transcriptional coactivators YAP1 and WWTR1/TAZ which leads to suppression of TGFB1-dependent transcription of target genes such as CCN2/CTGF, SERPINE1/PAI1, SNAI1/SNAIL1 and SMAD7. The polypeptide is Protein PALS1 (Pongo abelii (Sumatran orangutan)).